The following is a 281-amino-acid chain: Probable feruloyl esterase A (281 aa).

The signal sequence occupies residues 1 to 21; the sequence is MKNFFSMHAILLACSAGAGLA. Intrachain disulfides connect cysteine 50–cysteine 279, cysteine 112–cysteine 115, and cysteine 248–cysteine 255. Aspartate 98 provides a ligand contact to substrate. A glycan (N-linked (GlcNAc...) asparagine) is linked at asparagine 100. Tyrosine 101 contacts substrate. Catalysis depends on serine 154, which acts as the Nucleophile. N-linked (GlcNAc...) asparagine glycosylation occurs at asparagine 173. Aspartate 215 acts as the Charge relay system in catalysis. Histidine 268 is a substrate binding site. Catalysis depends on histidine 268, which acts as the Charge relay system.

It belongs to the AB hydrolase superfamily. FaeA family.

Its subcellular location is the secreted. It carries out the reaction feruloyl-polysaccharide + H2O = ferulate + polysaccharide.. Functionally, involved in degradation of plant cell walls. Hydrolyzes the feruloyl-arabinose ester bond in arabinoxylans, and the feruloyl-galactose ester bond in pectin. This chain is Probable feruloyl esterase A (faeA), found in Aspergillus oryzae (strain ATCC 42149 / RIB 40) (Yellow koji mold).